The chain runs to 234 residues: Nuclear transcription factor Y subunit C-1 (234 aa).

Disordered regions lie at residues 1–20 and 205–234; these read MDTN…PPPP and SVWQ…DGQG. The span at 7–20 shows a compositional bias: pro residues; sequence QPPPSAAGIPPPPP. Over residues 209 to 219 the composition is skewed to low complexity; sequence TSTGTGDDVSY. Positions 220 to 234 are enriched in gly residues; the sequence is GSGGSSGQGNLDGQG.

This sequence belongs to the NFYC/HAP5 subunit family. Heterotrimeric transcription factor composed of three components, NF-YA, NF-YB and NF-YC. NF-YB and NF-YC must interact and dimerize for NF-YA association and DNA binding. As to expression, ubiquitous. Present in etiolated seedlings.

The protein resides in the nucleus. Functionally, stimulates the transcription of various genes by recognizing and binding to a CCAAT motif in promoters. This Arabidopsis thaliana (Mouse-ear cress) protein is Nuclear transcription factor Y subunit C-1 (NFYC1).